The primary structure comprises 273 residues: MTDRYAVIGNPISHSQSPFIHEEFARATGQDISYERLFADIGRFNDVVGEFVASGGKGLNITLPFKGDAFRYASELTERARAAEAVNTLTFRDGKVYGDNTDGVGLVRDIVENLDYPIVGRRVLILGAGGAVRGVLEPILEQKPASLTIANRTVIKAEALAHHFARYGKVEAVGYAALEGRSFDIVINATSTSLNNEMPPLPHGVFTPRTLAYDMVYSTGLTPFLQRAQGENAGMLADGLGMLVEQAAESFSIWRGAQPETRKVTNMLREVLA.

Residues 15–17 and Thr-62 contribute to the shikimate site; that span reads SQS. Lys-66 acts as the Proton acceptor in catalysis. Position 78 (Glu-78) interacts with NADP(+). Positions 87 and 102 each coordinate shikimate. NADP(+) is bound by residues 127 to 131, 151 to 156, and Met-215; these read GAGGA and NRTVIK. Tyr-217 contributes to the shikimate binding site. Gly-239 is an NADP(+) binding site.

Belongs to the shikimate dehydrogenase family. In terms of assembly, homodimer.

The catalysed reaction is shikimate + NADP(+) = 3-dehydroshikimate + NADPH + H(+). The protein operates within metabolic intermediate biosynthesis; chorismate biosynthesis; chorismate from D-erythrose 4-phosphate and phosphoenolpyruvate: step 4/7. Functionally, involved in the biosynthesis of the chorismate, which leads to the biosynthesis of aromatic amino acids. Catalyzes the reversible NADPH linked reduction of 3-dehydroshikimate (DHSA) to yield shikimate (SA). This Chromobacterium violaceum (strain ATCC 12472 / DSM 30191 / JCM 1249 / CCUG 213 / NBRC 12614 / NCIMB 9131 / NCTC 9757 / MK) protein is Shikimate dehydrogenase (NADP(+)).